The primary structure comprises 1591 residues: Rho guanine nucleotide exchange factor TIAM1 (1591 aa).

The segment at 1–70 (MGNAESQNVD…TPSIPQSLAE (70 aa)) is disordered. Gly-2 carries the N-myristoyl glycine lipid modification. Positions 8–19 (NVDHEFYGEKHA) are enriched in basic and acidic residues. Basic residues predominate over residues 20–49 (SLGRKHTSRSLRLSHKTRRTRHASSGKAIH). The segment covering 53 to 67 (EVSTRSSSTPSIPQS) has biased composition (low complexity). Phosphoserine is present on residues Ser-231, Ser-356, and Ser-358. Disordered regions lie at residues 305 to 380 (QISL…DRAR) and 393 to 422 (MSTT…SPGQ). Polar residues predominate over residues 340-359 (TTDTDLLSRRSNATNSSYSP). Over residues 367 to 376 (GSDSGSSSTG) the composition is skewed to low complexity. Polar residues predominate over residues 412–422 (QSSGTLSSPGQ). The PH 1 domain maps to 434–549 (VRKAGALAVK…TAIHSACAAA (116 aa)). Ser-695 is modified (phosphoserine). In terms of domain architecture, RBD spans 765–832 (TPSWFCLPNN…QPEEDIYELL (68 aa)). A Phosphotyrosine; by NTRK2 modification is found at Tyr-829. The PDZ domain occupies 845–908 (NIHIEKSDAA…NNRAAGTLNS (64 aa)). Residues 933-1034 (GVELLENPPH…TSPQLATTRQ (102 aa)) form a disordered region. Over residues 958 to 975 (LTSNPGHSLSSEQGSSAE) the composition is skewed to polar residues. Residues 977-990 (APEEGEGPDLESSD) show a composition bias toward acidic residues. Positions 1014–1028 (PSDSSPSPQDATSPQ) are enriched in low complexity. One can recognise a DH domain in the interval 1040 to 1234 (KLRKVICELL…NKVASHINEM (195 aa)). Positions 1261–1397 (DLSMGDLLLH…KSVHSILRDK (137 aa)) constitute a PH 2 domain. Phosphotyrosine is present on Tyr-1323. Residues Lys-1404 and Lys-1420 each participate in a glycyl lysine isopeptide (Lys-Gly) (interchain with G-Cter in ubiquitin) cross-link. The tract at residues 1456–1481 (TIDSDAISASSPEKEPQQPAGGGDTD) is disordered. Ser-1519 is subject to Phosphoserine.

This sequence belongs to the TIAM family. Component of the Par polarity complex, composed of at least phosphorylated PRKCZ, PARD3 and TIAM1. Interacts with BAIAP2. Interacts (via PDZ domain) with CNTNAP4, SDC1 and SDC3 (via C-terminus). Interacts with CD44, PARD3 and MAPK8IP2. Interacts with EPHA8; regulates clathrin-mediated endocytosis of EPHA8. Interacts with NTRK2; mediates the activation of RAC1 by BDNF. Post-translationally, ubiquitinated. Undergoes 'Lys-48' ubiquitination at Lys-1404 and Lys-1420 by a CUL3(KBTBD6/7) E3 ubiquitin ligase complex composed of CUL3, RBX1, KBTBD6 and KBTBD7. 'Lys-48' ubiquitination at Lys-1404 and Lys-1420 triggers proteasomal degradation. Ubiquitination at Lys-1404 and Lys-1420 by CUL3(KBTBD6/7) also requires the membrane-associated protein GABARAP and may therefore be spatially restricted within the cell. As to expression, highly expressed in brain and testis and at low or moderate levels in almost all other normal tissues. Found in virtually all analyzed tumor cell lines including B- and T-lymphomas, neuroblastomas, melanomas and carcinomas.

Its subcellular location is the cell junction. It is found in the cell membrane. In terms of biological role, guanyl-nucleotide exchange factor that activates RHO-like proteins and connects extracellular signals to cytoskeletal activities. Activates RAC1, CDC42, and to a lesser extent RHOA and their downstream signaling to regulate processes like cell adhesion and cell migration. This is Rho guanine nucleotide exchange factor TIAM1 from Mus musculus (Mouse).